Consider the following 317-residue polypeptide: Beta-ketoacyl-[acyl-carrier-protein] synthase III (317 aa).

Residues C112 and H244 contribute to the active site. Residues 245–249 are ACP-binding; it reads QANIR. The active site involves N274.

It belongs to the thiolase-like superfamily. FabH family. Homodimer.

The protein localises to the cytoplasm. It catalyses the reaction malonyl-[ACP] + acetyl-CoA + H(+) = 3-oxobutanoyl-[ACP] + CO2 + CoA. It functions in the pathway lipid metabolism; fatty acid biosynthesis. In terms of biological role, catalyzes the condensation reaction of fatty acid synthesis by the addition to an acyl acceptor of two carbons from malonyl-ACP. Catalyzes the first condensation reaction which initiates fatty acid synthesis and may therefore play a role in governing the total rate of fatty acid production. Possesses both acetoacetyl-ACP synthase and acetyl transacylase activities. Its substrate specificity determines the biosynthesis of branched-chain and/or straight-chain of fatty acids. In Rickettsia typhi (strain ATCC VR-144 / Wilmington), this protein is Beta-ketoacyl-[acyl-carrier-protein] synthase III.